The sequence spans 281 residues: Phosphatidylglycerol--prolipoprotein diacylglyceryl transferase (281 aa).

7 helical membrane passes run 11 to 31, 57 to 77, 89 to 109, 121 to 141, 194 to 214, 222 to 242, and 255 to 275; these read IIFT…VISF, LLYS…IIFY, VFYI…AIIV, ILEI…AGRI, PTQL…IYFF, GSIS…IEFF, and IITM…IIMY. Arginine 140 contacts a 1,2-diacyl-sn-glycero-3-phospho-(1'-sn-glycerol).

The protein belongs to the Lgt family.

The protein resides in the cell inner membrane. The enzyme catalyses L-cysteinyl-[prolipoprotein] + a 1,2-diacyl-sn-glycero-3-phospho-(1'-sn-glycerol) = an S-1,2-diacyl-sn-glyceryl-L-cysteinyl-[prolipoprotein] + sn-glycerol 1-phosphate + H(+). It participates in protein modification; lipoprotein biosynthesis (diacylglyceryl transfer). Functionally, catalyzes the transfer of the diacylglyceryl group from phosphatidylglycerol to the sulfhydryl group of the N-terminal cysteine of a prolipoprotein, the first step in the formation of mature lipoproteins. This Buchnera aphidicola subsp. Acyrthosiphon pisum (strain 5A) protein is Phosphatidylglycerol--prolipoprotein diacylglyceryl transferase.